A 312-amino-acid chain; its full sequence is Very-long-chain 3-oxoacyl-CoA reductase (312 aa).

Residues 4–24 (ALPAAGFLYWVGASTIAYLTL) form a helical membrane-spanning segment. NADP(+) is bound at residue 50 to 79 (GEWAVVTGGTDGIGKSYAEELAKRGMKIVL). A run of 2 helical transmembrane segments spans residues 182-202 (GVIL…LTVY) and 271-291 (GYVI…WIYF). Substrate is bound at residue Ser-189. The active-site Proton acceptor is the Tyr-202. The short motif at 308 to 312 (KTKKN) is the Di-lysine motif element.

The protein belongs to the short-chain dehydrogenases/reductases (SDR) family. 17-beta-HSD 3 subfamily.

It localises to the endoplasmic reticulum membrane. It catalyses the reaction a very-long-chain (3R)-3-hydroxyacyl-CoA + NADP(+) = a very-long-chain 3-oxoacyl-CoA + NADPH + H(+). The catalysed reaction is 17beta-estradiol + NAD(+) = estrone + NADH + H(+). The enzyme catalyses 17beta-estradiol + NADP(+) = estrone + NADPH + H(+). It carries out the reaction 3-oxooctadecanoyl-CoA + NADPH + H(+) = (3R)-hydroxyoctadecanoyl-CoA + NADP(+). It catalyses the reaction (7Z,10Z,13Z,16Z)-3-oxodocosatetraenoyl-CoA + NADPH + H(+) = (3R)-hydroxy-(7Z,10Z,13Z,16Z)-docosatetraenoyl-CoA + NADP(+). The catalysed reaction is 3-oxo-(7Z,10Z,13Z,16Z,19Z)-docosapentaenoyl-CoA + NADPH + H(+) = (3R)-hydroxy-(7Z,10Z,13Z,16Z,19Z)-docosapentaenoyl-CoA + NADP(+). The enzyme catalyses (8Z,11Z,14Z)-3-oxoeicosatrienoyl-CoA + NADPH + H(+) = (3R)-hydroxy-(8Z,11Z,14Z)-eicosatrienoyl-CoA + NADP(+). It functions in the pathway lipid metabolism; fatty acid biosynthesis. It participates in steroid biosynthesis; estrogen biosynthesis. Catalyzes the second of the four reactions of the long-chain fatty acids elongation cycle. This endoplasmic reticulum-bound enzymatic process, allows the addition of two carbons to the chain of long- and very long-chain fatty acids/VLCFAs per cycle. This enzyme has a 3-ketoacyl-CoA reductase activity, reducing 3-ketoacyl-CoA to 3-hydroxyacyl-CoA, within each cycle of fatty acid elongation. Thereby, it may participate in the production of VLCFAs of different chain lengths that are involved in multiple biological processes as precursors of membrane lipids and lipid mediators. May also catalyze the transformation of estrone (E1) into estradiol (E2) and play a role in estrogen formation. In Rattus norvegicus (Rat), this protein is Very-long-chain 3-oxoacyl-CoA reductase.